The following is a 252-amino-acid chain: 3-dehydroquinate dehydratase (252 aa).

Residues S21, 46-48 (EWR), and R82 each bind 3-dehydroquinate. The Proton donor/acceptor role is filled by H143. K170 (schiff-base intermediate with substrate) is an active-site residue. 3-dehydroquinate-binding residues include R213, S232, and Q236.

It belongs to the type-I 3-dehydroquinase family. In terms of assembly, homodimer.

The enzyme catalyses 3-dehydroquinate = 3-dehydroshikimate + H2O. The protein operates within metabolic intermediate biosynthesis; chorismate biosynthesis; chorismate from D-erythrose 4-phosphate and phosphoenolpyruvate: step 3/7. With respect to regulation, inhibited by (2R)-2-methyl-3-dehydroquinic acid. Its function is as follows. Involved in the third step of the chorismate pathway, which leads to the biosynthesis of aromatic amino acids. Catalyzes the cis-dehydration of 3-dehydroquinate (DHQ) and introduces the first double bond of the aromatic ring to yield 3-dehydroshikimate. The reaction involves the formation of an imine intermediate between the keto group of 3-dehydroquinate and the epsilon-amino group of a Lys-170 at the active site. The chain is 3-dehydroquinate dehydratase from Salmonella typhimurium (strain LT2 / SGSC1412 / ATCC 700720).